Reading from the N-terminus, the 352-residue chain is Isoflavone-7-O-methyltransferase 9 (352 aa).

118-127 lines the substrate pocket; that stretch reads VLDPTLSGSY. S-adenosyl-L-methionine contacts are provided by Gly196, Asp219, Asp239, Met240, and Lys253. Catalysis depends on His257, which acts as the Proton acceptor.

Belongs to the class I-like SAM-binding methyltransferase superfamily. Cation-independent O-methyltransferase family. COMT subfamily. Homodimer.

It catalyses the reaction a 7-hydroxyisoflavone + S-adenosyl-L-methionine = a 7-methoxyisoflavone + S-adenosyl-L-homocysteine + H(+). It participates in phytoalexin biosynthesis; medicarpin biosynthesis. Transfers a methyl group to 7-hydroxyls of the isoflavones daidzein, genistein and 6,7,4'-trihydroxyisoflavone. Can also methylate (+)6a-hydroxymaackiain with lower efficiency. This Medicago sativa (Alfalfa) protein is Isoflavone-7-O-methyltransferase 9.